We begin with the raw amino-acid sequence, 144 residues long: Neuritin-A (144 aa).

Positions 1 to 27 (MGLKLSGRYIFLVLAVHLAYLLQAVKA) are cleaved as a signal peptide. S114 carries the GPI-anchor amidated serine lipid modification. Residues 115–144 (AGAPGQRLLFPAFLPLLMVFLSTLFILVLQ) constitute a propeptide, removed in mature form.

This sequence belongs to the neuritin family. As to expression, expressed in sensory regions of the brain including the visual, auditory and olfactory systems. Within the retina, only expressed in the retinal ganglion cells. Concentrated in axon tracts including retinal axons.

The protein localises to the cell membrane. Its function is as follows. Modulates postsynaptic dendritic arbor elaboration and synaptic maturation. The sequence is that of Neuritin-A (nrn1-a) from Xenopus laevis (African clawed frog).